The sequence spans 206 residues: 2,3-bisphosphoglycerate-dependent phosphoglycerate mutase (206 aa).

Residues 9–16, 22–23, Arg61, 88–91, Lys99, 115–116, and 159–160 contribute to the substrate site; these read RHGQSEWN, TG, ERDY, RR, and GN. His10 serves as the catalytic Tele-phosphohistidine intermediate. Glu88 (proton donor/acceptor) is an active-site residue.

This sequence belongs to the phosphoglycerate mutase family. BPG-dependent PGAM subfamily. Homodimer.

It catalyses the reaction (2R)-2-phosphoglycerate = (2R)-3-phosphoglycerate. It functions in the pathway carbohydrate degradation; glycolysis; pyruvate from D-glyceraldehyde 3-phosphate: step 3/5. Catalyzes the interconversion of 2-phosphoglycerate and 3-phosphoglycerate. The chain is 2,3-bisphosphoglycerate-dependent phosphoglycerate mutase from Azorhizobium caulinodans (strain ATCC 43989 / DSM 5975 / JCM 20966 / LMG 6465 / NBRC 14845 / NCIMB 13405 / ORS 571).